The following is a 207-amino-acid chain: ATP phosphoribosyltransferase (207 aa).

The protein belongs to the ATP phosphoribosyltransferase family. Short subfamily. As to quaternary structure, heteromultimer composed of HisG and HisZ subunits.

The protein resides in the cytoplasm. The catalysed reaction is 1-(5-phospho-beta-D-ribosyl)-ATP + diphosphate = 5-phospho-alpha-D-ribose 1-diphosphate + ATP. The protein operates within amino-acid biosynthesis; L-histidine biosynthesis; L-histidine from 5-phospho-alpha-D-ribose 1-diphosphate: step 1/9. In terms of biological role, catalyzes the condensation of ATP and 5-phosphoribose 1-diphosphate to form N'-(5'-phosphoribosyl)-ATP (PR-ATP). Has a crucial role in the pathway because the rate of histidine biosynthesis seems to be controlled primarily by regulation of HisG enzymatic activity. This Dictyoglomus thermophilum (strain ATCC 35947 / DSM 3960 / H-6-12) protein is ATP phosphoribosyltransferase.